The sequence spans 373 residues: Pulmonary surfactant-associated protein B (373 aa).

Positions 1–22 are cleaved as a signal peptide; that stretch reads MAKSHLLPWLLLLPILCGPGTA. The propeptide occupies 23–187; that stretch reads AAITYSLACA…PQTQDLSEQL (165 aa). One can recognise a Saposin A-type domain in the interval 24 to 64; the sequence is AITYSLACAQGPEFWCQSLEQALQCRALGHCLQEVWGHVEA. Saposin B-type domains lie at 64–146, 191–268, and 287–362; these read ADDL…KPRH, PIPY…SSED, and QDSD…AAPF. 9 cysteine pairs are disulfide-bonded: Cys68–Cys142, Cys71–Cys136, Cys99–Cys111, Cys195–Cys264, Cys198–Cys258, Cys222–Cys233, Cys291–Cys358, Cys294–Cys352, and Cys317–Cys327. The N-linked (GlcNAc...) asparagine glycan is linked to Asn73. A propeptide spanning residues 267–373 is cleaved from the precursor; sequence EDSAGPALPA…PLQCVHSPHF (107 aa). Asn303 carries N-linked (GlcNAc...) asparagine glycosylation.

As to quaternary structure, homodimer; disulfide-linked.

It localises to the secreted. It is found in the extracellular space. The protein localises to the surface film. Its function is as follows. Pulmonary surfactant-associated proteins promote alveolar stability by lowering the surface tension at the air-liquid interface in the peripheral air spaces. SP-B increases the collapse pressure of palmitic acid to nearly 70 millinewtons per meter. The polypeptide is Pulmonary surfactant-associated protein B (SFTPB) (Bos taurus (Bovine)).